A 220-amino-acid polypeptide reads, in one-letter code: N-(5'-phosphoribosyl)anthranilate isomerase (220 aa).

This sequence belongs to the TrpF family.

It catalyses the reaction N-(5-phospho-beta-D-ribosyl)anthranilate = 1-(2-carboxyphenylamino)-1-deoxy-D-ribulose 5-phosphate. The protein operates within amino-acid biosynthesis; L-tryptophan biosynthesis; L-tryptophan from chorismate: step 3/5. This Xylella fastidiosa (strain M23) protein is N-(5'-phosphoribosyl)anthranilate isomerase.